We begin with the raw amino-acid sequence, 497 residues long: Glycerol kinase (497 aa).

T12 contributes to the ADP binding site. Positions 12, 13, and 14 each coordinate ATP. Sn-glycerol 3-phosphate is bound at residue T12. R16 provides a ligand contact to ADP. The sn-glycerol 3-phosphate site is built by R82, E83, Y134, and D243. Positions 82, 83, 134, 243, and 244 each coordinate glycerol. Residues T265 and G308 each contribute to the ADP site. The ATP site is built by T265, G308, Q312, and G411. G411 contacts ADP.

Belongs to the FGGY kinase family.

It catalyses the reaction glycerol + ATP = sn-glycerol 3-phosphate + ADP + H(+). It functions in the pathway polyol metabolism; glycerol degradation via glycerol kinase pathway; sn-glycerol 3-phosphate from glycerol: step 1/1. With respect to regulation, inhibited by fructose 1,6-bisphosphate (FBP). Functionally, key enzyme in the regulation of glycerol uptake and metabolism. Catalyzes the phosphorylation of glycerol to yield sn-glycerol 3-phosphate. The protein is Glycerol kinase of Xanthobacter autotrophicus (strain ATCC BAA-1158 / Py2).